The primary structure comprises 1370 residues: DNA-directed RNA polymerase subunit beta (1370 aa).

It belongs to the RNA polymerase beta chain family. As to quaternary structure, the RNAP catalytic core consists of 2 alpha, 1 beta, 1 beta' and 1 omega subunit. When a sigma factor is associated with the core the holoenzyme is formed, which can initiate transcription.

It carries out the reaction RNA(n) + a ribonucleoside 5'-triphosphate = RNA(n+1) + diphosphate. Functionally, DNA-dependent RNA polymerase catalyzes the transcription of DNA into RNA using the four ribonucleoside triphosphates as substrates. This is DNA-directed RNA polymerase subunit beta from Geobacter sulfurreducens (strain ATCC 51573 / DSM 12127 / PCA).